A 132-amino-acid polypeptide reads, in one-letter code: Ribosome-binding factor A (132 aa).

The protein belongs to the RbfA family. In terms of assembly, monomer. Binds 30S ribosomal subunits, but not 50S ribosomal subunits or 70S ribosomes.

It localises to the cytoplasm. One of several proteins that assist in the late maturation steps of the functional core of the 30S ribosomal subunit. Associates with free 30S ribosomal subunits (but not with 30S subunits that are part of 70S ribosomes or polysomes). Required for efficient processing of 16S rRNA. May interact with the 5'-terminal helix region of 16S rRNA. The polypeptide is Ribosome-binding factor A (Caldicellulosiruptor bescii (strain ATCC BAA-1888 / DSM 6725 / KCTC 15123 / Z-1320) (Anaerocellum thermophilum)).